The chain runs to 324 residues: Uroporphyrinogen decarboxylase (324 aa).

Substrate contacts are provided by residues 14–18 (RQAGR), Phe32, Asp63, Tyr136, Ser191, and His302.

The protein belongs to the uroporphyrinogen decarboxylase family. As to quaternary structure, homodimer.

It localises to the cytoplasm. It carries out the reaction uroporphyrinogen III + 4 H(+) = coproporphyrinogen III + 4 CO2. The protein operates within porphyrin-containing compound metabolism; protoporphyrin-IX biosynthesis; coproporphyrinogen-III from 5-aminolevulinate: step 4/4. Catalyzes the decarboxylation of four acetate groups of uroporphyrinogen-III to yield coproporphyrinogen-III. The polypeptide is Uroporphyrinogen decarboxylase (Neorickettsia sennetsu (strain ATCC VR-367 / Miyayama) (Ehrlichia sennetsu)).